An 853-amino-acid chain; its full sequence is DNA mismatch repair protein MutS (853 aa).

613 to 620 (GPNMGGKS) contributes to the ATP binding site.

This sequence belongs to the DNA mismatch repair MutS family.

In terms of biological role, this protein is involved in the repair of mismatches in DNA. It is possible that it carries out the mismatch recognition step. This protein has a weak ATPase activity. The sequence is that of DNA mismatch repair protein MutS from Vibrio parahaemolyticus serotype O3:K6 (strain RIMD 2210633).